The chain runs to 195 residues: Recombination protein RecR (195 aa).

Residues 53–68 form a C4-type zinc finger; that stretch reads CPVCFNIDVKSPCSIC. The 96-residue stretch at 76–171 folds into the Toprim domain; that stretch reads QLLCIVEELG…KVTRLACGIP (96 aa).

This sequence belongs to the RecR family.

May play a role in DNA repair. It seems to be involved in an RecBC-independent recombinational process of DNA repair. It may act with RecF and RecO. The polypeptide is Recombination protein RecR (Ehrlichia chaffeensis (strain ATCC CRL-10679 / Arkansas)).